Here is a 359-residue protein sequence, read N- to C-terminus: Dihydroorotate dehydrogenase (quinone) (359 aa).

FMN is bound by residues A61–K65 and T85. Residue K65 coordinates substrate. N110–F114 is a binding site for substrate. Residues N139 and N170 each coordinate FMN. N170 contacts substrate. The Nucleophile role is filled by S173. Position 175 (N175) interacts with substrate. FMN-binding residues include K211 and S239. N240 to T241 lines the substrate pocket. Residues G262, G291, and Y312–T313 contribute to the FMN site.

Belongs to the dihydroorotate dehydrogenase family. Type 2 subfamily. In terms of assembly, monomer. It depends on FMN as a cofactor.

It is found in the cell membrane. It carries out the reaction (S)-dihydroorotate + a quinone = orotate + a quinol. Its pathway is pyrimidine metabolism; UMP biosynthesis via de novo pathway; orotate from (S)-dihydroorotate (quinone route): step 1/1. In terms of biological role, catalyzes the conversion of dihydroorotate to orotate with quinone as electron acceptor. The polypeptide is Dihydroorotate dehydrogenase (quinone) (Mesorhizobium japonicum (strain LMG 29417 / CECT 9101 / MAFF 303099) (Mesorhizobium loti (strain MAFF 303099))).